Consider the following 407-residue polypeptide: 4-hydroxy-3-methylbut-2-en-1-yl diphosphate synthase (flavodoxin) (407 aa).

[4Fe-4S] cluster-binding residues include Cys-296, Cys-299, Cys-342, and Glu-349.

Belongs to the IspG family. Requires [4Fe-4S] cluster as cofactor.

The enzyme catalyses (2E)-4-hydroxy-3-methylbut-2-enyl diphosphate + oxidized [flavodoxin] + H2O + 2 H(+) = 2-C-methyl-D-erythritol 2,4-cyclic diphosphate + reduced [flavodoxin]. Its pathway is isoprenoid biosynthesis; isopentenyl diphosphate biosynthesis via DXP pathway; isopentenyl diphosphate from 1-deoxy-D-xylulose 5-phosphate: step 5/6. Functionally, converts 2C-methyl-D-erythritol 2,4-cyclodiphosphate (ME-2,4cPP) into 1-hydroxy-2-methyl-2-(E)-butenyl 4-diphosphate. The chain is 4-hydroxy-3-methylbut-2-en-1-yl diphosphate synthase (flavodoxin) from Methylococcus capsulatus (strain ATCC 33009 / NCIMB 11132 / Bath).